A 372-amino-acid chain; its full sequence is Cell division protein FtsZ 1 (372 aa).

GTP contacts are provided by residues 51–55 (GAGCN), 138–140 (GTG), glutamate 169, arginine 173, and aspartate 216. Residues 352–372 (EETPAPSEEETTPVKIDIPEL) are disordered.

The protein belongs to the FtsZ family. In terms of assembly, homodimer. Polymerizes to form a dynamic ring structure in a strictly GTP-dependent manner. Interacts directly with several other division proteins.

Its subcellular location is the cytoplasm. Functionally, essential cell division protein that forms a contractile ring structure (Z ring) at the future cell division site. The regulation of the ring assembly controls the timing and the location of cell division. One of the functions of the FtsZ ring is to recruit other cell division proteins to the septum to produce a new cell wall between the dividing cells. Binds GTP and shows GTPase activity. This Pyrococcus horikoshii (strain ATCC 700860 / DSM 12428 / JCM 9974 / NBRC 100139 / OT-3) protein is Cell division protein FtsZ 1.